A 334-amino-acid polypeptide reads, in one-letter code: MISRVENISQPQFYNHNKIWTKPFIIAIIVVIILGIISLFTGVYDIRGQEDGMEMFFITRVPRTVALMLTGAAMAMAGLVMQLITQNRFVEPTTTGTIEWSSLGLLFVYLLFPAPTLVQRMTGAIIFSFIGTMIFFLFLRRVKLRSSLIVPIIGLMLGAVISAVSTFLGLLFQMTQSIETWFVGSFANIQVGRYEYLWLIVIVTLLIFMYANRLTLAGLGEDVATSLGVNYNRIVLFGTALISVAVGIVAAVIGNLPFLGLIVPNIVSMFRGDDLRSNLPWVCVIGMGTITACDIISRTIIKPFELPVSLILASVGAVVFITILLRKRKPRRLR.

Transmembrane regions (helical) follow at residues 24 to 44, 64 to 84, 98 to 118, 119 to 139, 152 to 172, 197 to 217, 234 to 254, 277 to 297, and 304 to 324; these read FIIA…TGVY, TVAL…MQLI, IEWS…PTLV, QRMT…FLFL, IIGL…GLLF, LWLI…LTLA, IVLF…AVIG, SNLP…DIIS, and FELP…ITIL.

Belongs to the binding-protein-dependent transport system permease family. FecCD subfamily. In terms of assembly, the complex is composed of two ATP-binding proteins (FatE), two transmembrane proteins (FatC and FatD) and a solute-binding protein (FpuA).

Its subcellular location is the cell membrane. In terms of biological role, part of an ABC transporter complex involved in ferric-petrobactin uptake. Probably responsible for the translocation of the substrate across the membrane. This Bacillus anthracis protein is Petrobactin import system permease protein FatD.